The sequence spans 48 residues: uncharacterized protein (48 aa).

Residues 25–47 (TFASIGVTVGVQIVILLIWGLSW) traverse the membrane as a helical segment.

The protein localises to the membrane. This is an uncharacterized protein from Archaeoglobus fulgidus (strain ATCC 49558 / DSM 4304 / JCM 9628 / NBRC 100126 / VC-16).